A 229-amino-acid polypeptide reads, in one-letter code: Heptaprenylglyceryl phosphate synthase (229 aa).

Lys-12 serves as a coordination point for sn-glycerol 1-phosphate. Positions 14 and 40 each coordinate Mg(2+). Residues 159-164 (YLEYSG), Gly-189, and 209-210 (GN) contribute to the sn-glycerol 1-phosphate site.

This sequence belongs to the GGGP/HepGP synthase family. Group I subfamily. In terms of assembly, homodimer. It depends on Mg(2+) as a cofactor.

It carries out the reaction sn-glycerol 1-phosphate + all-trans-heptaprenyl diphosphate = 3-heptaprenyl-sn-glycero-1-phosphate + diphosphate. The protein operates within membrane lipid metabolism; glycerophospholipid metabolism. Prenyltransferase that catalyzes in vivo the transfer of the heptaprenyl moiety of heptaprenyl pyrophosphate (HepPP; 35 carbon atoms) to the C3 hydroxyl of sn-glycerol-1-phosphate (G1P), producing heptaprenylglyceryl phosphate (HepGP). This reaction is an ether-bond-formation step in the biosynthesis of archaea-type G1P-based membrane lipids found in Bacillales. This chain is Heptaprenylglyceryl phosphate synthase, found in Bacillus anthracis (strain A0248).